A 404-amino-acid chain; its full sequence is MSPSDVPINWKRNLTVTWLGCFLTGAAFSLVMPFLPLYVEQLGVTGHSALNMWSGLVFSITFLFSAIASPFWGGLADRKGRKIMLLRSALGMAIVMLLMGMAQNIWQFLILRALLGLLGGFIPNANALIATQVPRHKSGWALGTLSTGGVSGALLGPLAGGLLADHYGLRPVFFITASVLFICFLLTFFFIRENFLPVSKKEMLHVREVVASLKNPRLVLSLFVTTLIIQVATGSIAPILTLYVRELAGDVSNIAFISGMIASVPGVAALLSAPRLGKLGDRIGPEKILIVALIISVLLLIPMSFVQTPWQLALLRFLLGAADGALLPAVQTLLVYNSTNQIAGRIFSYNQSFRDIGNVTGPLMGAAISASYGFRAVFCVTAGVVLFNAIYSWNSLRRRRLAIE.

11 consecutive transmembrane segments (helical) span residues 19-39, 56-76, 90-110, 113-133, 144-164, 171-191, 222-242, 254-274, 288-308, 317-337, and 376-396; these read LGCF…PLYV, LVFS…GGLA, LGMA…QFLI, ALLG…ATQV, TLST…GLLA, PVFF…FFFI, LFVT…ILTL, IAFI…LSAP, ILIV…FVQT, FLLG…LVYN, and AVFC…WNSL.

The protein belongs to the major facilitator superfamily. DHA1 family. MdtG (TC 2.A.1.2.20) subfamily.

The protein resides in the cell inner membrane. The sequence is that of Multidrug resistance protein MdtG from Salmonella typhimurium (strain LT2 / SGSC1412 / ATCC 700720).